The following is a 402-amino-acid chain: Multidrug resistance protein MdtG (402 aa).

11 helical membrane-spanning segments follow: residues 14-34 (LYIV…IMPF), 52-72 (LWTG…APFW), 90-110 (LGMA…QLLI), 113-133 (ALLG…ATQV), 149-169 (AVSG…LYGL), 171-191 (PVFF…LFFV), 219-239 (VICL…VTPI), 254-274 (LAFI…ISAP), 288-308 (VLIF…LVSN), 318-338 (LLGA…LYNI), and 376-396 (AVFY…WISF).

Belongs to the major facilitator superfamily. DHA1 family. MdtG (TC 2.A.1.2.20) subfamily.

It is found in the cell inner membrane. The sequence is that of Multidrug resistance protein MdtG from Proteus mirabilis (strain HI4320).